We begin with the raw amino-acid sequence, 359 residues long: uncharacterized protein (359 aa).

This is an uncharacterized protein from Treponema pallidum (strain Nichols).